Reading from the N-terminus, the 184-residue chain is ATP synthase subunit b, chloroplastic (184 aa).

Residues L27–L49 form a helical membrane-spanning segment.

This sequence belongs to the ATPase B chain family. As to quaternary structure, F-type ATPases have 2 components, F(1) - the catalytic core - and F(0) - the membrane proton channel. F(1) has five subunits: alpha(3), beta(3), gamma(1), delta(1), epsilon(1). F(0) has four main subunits: a(1), b(1), b'(1) and c(10-14). The alpha and beta chains form an alternating ring which encloses part of the gamma chain. F(1) is attached to F(0) by a central stalk formed by the gamma and epsilon chains, while a peripheral stalk is formed by the delta, b and b' chains.

It localises to the plastid. The protein resides in the chloroplast thylakoid membrane. F(1)F(0) ATP synthase produces ATP from ADP in the presence of a proton or sodium gradient. F-type ATPases consist of two structural domains, F(1) containing the extramembraneous catalytic core and F(0) containing the membrane proton channel, linked together by a central stalk and a peripheral stalk. During catalysis, ATP synthesis in the catalytic domain of F(1) is coupled via a rotary mechanism of the central stalk subunits to proton translocation. Functionally, component of the F(0) channel, it forms part of the peripheral stalk, linking F(1) to F(0). This is ATP synthase subunit b, chloroplastic from Eucalyptus globulus subsp. globulus (Tasmanian blue gum).